The sequence spans 86 residues: MSTSRLLLPTTNQQQNSSPVIKEVDLNQNTPIPVVWQKTKKPPFVSFPRHEPSETIVISSKPRLFSFAKKIKPEAEQRKRKRTTEI.

This is an uncharacterized protein from Schizosaccharomyces pombe (strain 972 / ATCC 24843) (Fission yeast).